The following is a 229-amino-acid chain: Uracil-DNA glycosylase (229 aa).

Aspartate 65 functions as the Proton acceptor in the catalytic mechanism.

It belongs to the uracil-DNA glycosylase (UDG) superfamily. UNG family.

Its subcellular location is the cytoplasm. The catalysed reaction is Hydrolyzes single-stranded DNA or mismatched double-stranded DNA and polynucleotides, releasing free uracil.. In terms of biological role, excises uracil residues from the DNA which can arise as a result of misincorporation of dUMP residues by DNA polymerase or due to deamination of cytosine. This chain is Uracil-DNA glycosylase, found in Oceanobacillus iheyensis (strain DSM 14371 / CIP 107618 / JCM 11309 / KCTC 3954 / HTE831).